Here is a 391-residue protein sequence, read N- to C-terminus: MTSVSLGMPAAPPPVLAPRRKTRQIKVGSVGVGSDSPISLQSMTTTPTTDINATLQQIAELTASGCDIVRVACPSADDAEALPIIAKKSQIPVIADIHFQPKYVFAAIEAGCAAVRVNPGNIRKFDDQIKEIAQAAKDHGTSIRIGVNAGSLDPRLMEKYGKATPEALVESAVWEASLFEEHDFHDFKISVKHNDPVVMVRAYELLAERGAWPLHLGVTEAGPAFQGTIKSATAFGALLSKGIGDTIRVSLSAPPVEEIKVGNQILQSLNLRPRKLEIVSCPSCGRAQVDVYTLAEEVTAGLEGMEIPLRVAVMGCVVNGPGEAREADLGVASGNGKGQIFVKGEVIKTVPESQIVETLIEEAMRIAEEYEEMGGEDGQGGIKGSPVVSVS.

4 residues coordinate [4Fe-4S] cluster: C281, C284, C316, and E323. Residues 372–391 are disordered; it reads EMGGEDGQGGIKGSPVVSVS.

The protein belongs to the IspG family. [4Fe-4S] cluster is required as a cofactor.

The enzyme catalyses (2E)-4-hydroxy-3-methylbut-2-enyl diphosphate + oxidized [flavodoxin] + H2O + 2 H(+) = 2-C-methyl-D-erythritol 2,4-cyclic diphosphate + reduced [flavodoxin]. It functions in the pathway isoprenoid biosynthesis; isopentenyl diphosphate biosynthesis via DXP pathway; isopentenyl diphosphate from 1-deoxy-D-xylulose 5-phosphate: step 5/6. In terms of biological role, converts 2C-methyl-D-erythritol 2,4-cyclodiphosphate (ME-2,4cPP) into 1-hydroxy-2-methyl-2-(E)-butenyl 4-diphosphate. This chain is 4-hydroxy-3-methylbut-2-en-1-yl diphosphate synthase (flavodoxin), found in Renibacterium salmoninarum (strain ATCC 33209 / DSM 20767 / JCM 11484 / NBRC 15589 / NCIMB 2235).